The primary structure comprises 338 residues: Phenylalanine--tRNA ligase alpha subunit (338 aa).

Glu252 contributes to the Mg(2+) binding site.

This sequence belongs to the class-II aminoacyl-tRNA synthetase family. Phe-tRNA synthetase alpha subunit type 1 subfamily. In terms of assembly, tetramer of two alpha and two beta subunits. Mg(2+) serves as cofactor.

It is found in the cytoplasm. It catalyses the reaction tRNA(Phe) + L-phenylalanine + ATP = L-phenylalanyl-tRNA(Phe) + AMP + diphosphate + H(+). This is Phenylalanine--tRNA ligase alpha subunit from Pseudomonas entomophila (strain L48).